The following is a 316-amino-acid chain: Nucleotide-binding protein Sala_2050 (316 aa).

Residue 18–25 (GLSGAGKS) coordinates ATP. 69 to 72 (DSRS) contacts GTP. A disordered region spans residues 283–316 (GYEPTLTHRNLDSAPQDGLEGKPPSAARASGGAR).

Belongs to the RapZ-like family.

In terms of biological role, displays ATPase and GTPase activities. The protein is Nucleotide-binding protein Sala_2050 of Sphingopyxis alaskensis (strain DSM 13593 / LMG 18877 / RB2256) (Sphingomonas alaskensis).